Reading from the N-terminus, the 156-residue chain is Small ribosomal subunit protein uS7 (156 aa).

The protein belongs to the universal ribosomal protein uS7 family. As to quaternary structure, part of the 30S ribosomal subunit. Contacts proteins S9 and S11.

In terms of biological role, one of the primary rRNA binding proteins, it binds directly to 16S rRNA where it nucleates assembly of the head domain of the 30S subunit. Is located at the subunit interface close to the decoding center, probably blocks exit of the E-site tRNA. This is Small ribosomal subunit protein uS7 from Corynebacterium jeikeium (strain K411).